We begin with the raw amino-acid sequence, 390 residues long: DNA polymerase IV (390 aa).

The UmuC domain maps to valine 6 to glycine 187. The Mg(2+) site is built by aspartate 10 and aspartate 105. Glutamate 106 is an active-site residue.

This sequence belongs to the DNA polymerase type-Y family. In terms of assembly, monomer. Mg(2+) serves as cofactor.

The protein resides in the cytoplasm. The enzyme catalyses DNA(n) + a 2'-deoxyribonucleoside 5'-triphosphate = DNA(n+1) + diphosphate. Poorly processive, error-prone DNA polymerase involved in untargeted mutagenesis. Copies undamaged DNA at stalled replication forks, which arise in vivo from mismatched or misaligned primer ends. These misaligned primers can be extended by PolIV. Exhibits no 3'-5' exonuclease (proofreading) activity. May be involved in translesional synthesis, in conjunction with the beta clamp from PolIII. The polypeptide is DNA polymerase IV (Dehalococcoides mccartyi (strain CBDB1)).